The sequence spans 533 residues: CEP295 N-terminal-like protein (533 aa).

Disordered regions lie at residues 1–40 (MQRD…TTLQ), 84–176 (RSMG…RVTR), 286–333 (LKAD…ETTE), and 370–399 (AGTS…LEDE). Positions 40–72 (QQWKARQLQRLAEELKAEWQEARLQQVRQAERL) form a coiled coil. The span at 107 to 126 (KERNRAAFREERGRREEHPR) shows a compositional bias: basic and acidic residues. Residues 416-531 (MALRQKQKAE…ARKRLQEFQK (116 aa)) adopt a coiled-coil conformation.

In terms of tissue distribution, expressed in mature spermatozoa (at protein level). Detected in retina, lung and kidney. In brain, highly expressed in brain-stem, cerebral cortex and thalamus with lesser expression in cerebellum and hippocampus.

The protein localises to the cell projection. It localises to the cilium. This is CEP295 N-terminal-like protein from Mus musculus (Mouse).